Reading from the N-terminus, the 540-residue chain is CUB domain-containing protein 2 (540 aa).

The signal sequence occupies residues 1-22 (MLAEWGACLLLAVALLGPGLQA). The Extracellular portion of the chain corresponds to 23–516 (QAMEGVKCGG…VSMVAQDTSD (494 aa)). Intrachain disulfides connect C30–C56, C83–C106, C145–C171, C198–C218, C257–C283, and C314–C336. 3 consecutive CUB domains span residues 30–143 (CGGV…YQKD), 145–255 (CGGV…YFSG), and 257–373 (CQEV…YIGV). N40 carries an N-linked (GlcNAc...) asparagine glycan. N-linked (GlcNAc...) asparagine glycosylation occurs at N267. N-linked (GlcNAc...) asparagine glycans are attached at residues N377, N435, and N436. The helical transmembrane segment at 517 to 537 (IVFLGLCILAGILMVIAIVVL) threads the bilayer. Residues 538–540 (MLL) lie on the Cytoplasmic side of the membrane.

Its subcellular location is the membrane. The polypeptide is CUB domain-containing protein 2 (CDCP2) (Homo sapiens (Human)).